The primary structure comprises 259 residues: Phosphoadenosine 5'-phosphosulfate reductase (259 aa).

Cys-244 functions as the Nucleophile; cysteine thiosulfonate intermediate in the catalytic mechanism.

This sequence belongs to the PAPS reductase family. CysH subfamily.

It localises to the cytoplasm. The catalysed reaction is [thioredoxin]-disulfide + sulfite + adenosine 3',5'-bisphosphate + 2 H(+) = [thioredoxin]-dithiol + 3'-phosphoadenylyl sulfate. It functions in the pathway sulfur metabolism; hydrogen sulfide biosynthesis; sulfite from sulfate: step 3/3. Its function is as follows. Catalyzes the formation of sulfite from phosphoadenosine 5'-phosphosulfate (PAPS) using thioredoxin as an electron donor. This is Phosphoadenosine 5'-phosphosulfate reductase from Vibrio campbellii (strain ATCC BAA-1116).